We begin with the raw amino-acid sequence, 362 residues long: Chalcone synthase A (362 aa).

Residue Cys168 is part of the active site.

It belongs to the thiolase-like superfamily. Chalcone/stilbene synthases family.

It catalyses the reaction (E)-4-coumaroyl-CoA + 3 malonyl-CoA + 3 H(+) = 2',4,4',6'-tetrahydroxychalcone + 3 CO2 + 4 CoA. Its pathway is secondary metabolite biosynthesis; flavonoid biosynthesis. Functionally, the primary product of this enzyme is 4,2',4',6'-tetrahydroxychalcone (also termed naringenin-chalcone or chalcone) which can under specific conditions spontaneously isomerize into naringenin. The polypeptide is Chalcone synthase A (CHSA) (Ipomoea platensis (Morning glory)).